Consider the following 539-residue polypeptide: GMP synthase [glutamine-hydrolyzing] (539 aa).

One can recognise a Glutamine amidotransferase type-1 domain in the interval 4–202; it reads KVLILDFGSQ…VLEIAGAKPD (199 aa). Residue Cys-81 is the Nucleophile of the active site. Catalysis depends on residues His-176 and Glu-178. Residues 203–395 enclose the GMPS ATP-PPase domain; the sequence is WVMRDHIDEA…LGLPHEMVYR (193 aa). ATP is bound at residue 230-236; the sequence is SGGVDSS.

Homodimer.

It catalyses the reaction XMP + L-glutamine + ATP + H2O = GMP + L-glutamate + AMP + diphosphate + 2 H(+). It participates in purine metabolism; GMP biosynthesis; GMP from XMP (L-Gln route): step 1/1. Its function is as follows. Catalyzes the synthesis of GMP from XMP. This is GMP synthase [glutamine-hydrolyzing] from Ralstonia pickettii (strain 12J).